A 220-amino-acid polypeptide reads, in one-letter code: Large ribosomal subunit protein uL4 (220 aa).

Residues 45-102 (AARQGTHKTKTRGEVRGGGRKPFRQKGTGRARQGSIRAPHYTGGGTVHGPVPRDYSQR) are disordered. Over residues 62 to 73 (GGRKPFRQKGTG) the composition is skewed to basic residues.

Belongs to the universal ribosomal protein uL4 family. As to quaternary structure, part of the 50S ribosomal subunit.

Functionally, one of the primary rRNA binding proteins, this protein initially binds near the 5'-end of the 23S rRNA. It is important during the early stages of 50S assembly. It makes multiple contacts with different domains of the 23S rRNA in the assembled 50S subunit and ribosome. Its function is as follows. Forms part of the polypeptide exit tunnel. The sequence is that of Large ribosomal subunit protein uL4 from Corynebacterium aurimucosum (strain ATCC 700975 / DSM 44827 / CIP 107346 / CN-1) (Corynebacterium nigricans).